Here is a 460-residue protein sequence, read N- to C-terminus: Orexin receptor type 2 (460 aa).

Over 1–54 (MSSTKLEDSLSRRNWSSASELNETQEPFLNPTDYDDEEFLRYLWREYLHPKEYE) the chain is Extracellular. Asn-14 and Asn-22 each carry an N-linked (GlcNAc...) asparagine glycan. A required for response to orexin-A region spans residues 33–49 (DYDDEEFLRYLWREYLH). Residues 55–75 (WVLIAGYIIVFVVALIGNVLV) traverse the membrane as a helical segment. The Cytoplasmic portion of the chain corresponds to 76–88 (CVAVWKNHHMRTV). The helical transmembrane segment at 89–110 (TNYFIVNLSLADVLVTITCLPA) threads the bilayer. The Extracellular portion of the chain corresponds to 111–127 (TLVVDITETWFFGQSLC). Cysteines 127 and 210 form a disulfide. A helical transmembrane segment spans residues 128-150 (KVIPYLQTVSVSVSVLTLSCIAL). Topologically, residues 151-170 (DRWYAICHPLMFKSTAKRAR) are cytoplasmic. Residues 171 to 191 (NSIVVIWIVSCIIMIPQAIVM) traverse the membrane as a helical segment. At 192-222 (ECSSMLPGLANKTTLFTVCDEHWGGEVYPKM) the chain is on the extracellular side. N-linked (GlcNAc...) asparagine glycosylation occurs at Asn-202. Residues 223–243 (YHICFFLVTYMAPLCLMILAY) form a helical membrane-spanning segment. The Cytoplasmic segment spans residues 244 to 304 (LQIFRKLWCR…QIRARRKTAR (61 aa)). Residues 305–326 (MLMVVLLVFAICYLPISILNVL) traverse the membrane as a helical segment. Residues 327–342 (KRVFGMFTHTEDRETV) lie on the Extracellular side of the membrane. Residues 343-366 (YAWFTFSHWLVYANSAANPIIYNF) form a helical membrane-spanning segment. The Cytoplasmic portion of the chain corresponds to 367 to 460 (LSGKFREEFK…SSLLSTWLEV (94 aa)).

Belongs to the G-protein coupled receptor 1 family. Widely expressed. Isoform 2 not detected in skeletal muscle and kidney.

It localises to the cell membrane. In terms of biological role, nonselective, high-affinity receptor for both orexin-A and orexin-B neuropeptides. Triggers an increase in cytoplasmic Ca(2+) levels in response to orexin-A binding. This chain is Orexin receptor type 2 (Hcrtr2), found in Mus musculus (Mouse).